The sequence spans 115 residues: Large ribosomal subunit protein bL20c (115 aa).

Belongs to the bacterial ribosomal protein bL20 family.

It localises to the plastid. It is found in the organellar chromatophore. In terms of biological role, binds directly to 23S ribosomal RNA and is necessary for the in vitro assembly process of the 50S ribosomal subunit. It is not involved in the protein synthesizing functions of that subunit. This Paulinella chromatophora protein is Large ribosomal subunit protein bL20c.